Consider the following 860-residue polypeptide: Glucans biosynthesis glucosyltransferase H (860 aa).

6 consecutive transmembrane segments (helical) span residues 146–166 (ILLI…KGIL), 200–220 (ILLL…TALM), 519–539 (VFLT…FLVL), 576–596 (LFST…ILIW), 610–630 (TVSM…RMLF), and 686–706 (FLWW…VSVI).

This sequence belongs to the glycosyltransferase 2 family. OpgH subfamily.

It localises to the cell inner membrane. Its pathway is glycan metabolism; osmoregulated periplasmic glucan (OPG) biosynthesis. Its function is as follows. Involved in the biosynthesis of osmoregulated periplasmic glucans (OPGs). This is Glucans biosynthesis glucosyltransferase H from Pseudomonas savastanoi pv. phaseolicola (strain 1448A / Race 6) (Pseudomonas syringae pv. phaseolicola (strain 1448A / Race 6)).